A 68-amino-acid chain; its full sequence is Conotoxin Cal14.13b (68 aa).

Residues 1 to 20 (MKLCVVIVLLMLAMPFNGGE) form the signal peptide. Positions 21–68 (ASRFFNQHARSQRSGMKTRGIWCDPPCPEGETCRGGECSDEFNGDMGR) are excised as a propeptide. Met-66 carries the post-translational modification Methionine amide.

Contains 2 disulfide bonds. As to expression, expressed by the venom duct.

Its subcellular location is the secreted. Functionally, probable neurotoxin with unknown target. Possibly targets ion channels. The polypeptide is Conotoxin Cal14.13b (Californiconus californicus (California cone)).